The chain runs to 172 residues: Adenine phosphoribosyltransferase (172 aa).

Belongs to the purine/pyrimidine phosphoribosyltransferase family. As to quaternary structure, homodimer.

It localises to the cytoplasm. The catalysed reaction is AMP + diphosphate = 5-phospho-alpha-D-ribose 1-diphosphate + adenine. It functions in the pathway purine metabolism; AMP biosynthesis via salvage pathway; AMP from adenine: step 1/1. Functionally, catalyzes a salvage reaction resulting in the formation of AMP, that is energically less costly than de novo synthesis. In Exiguobacterium sibiricum (strain DSM 17290 / CCUG 55495 / CIP 109462 / JCM 13490 / 255-15), this protein is Adenine phosphoribosyltransferase.